Reading from the N-terminus, the 311-residue chain is Protoheme IX farnesyltransferase (311 aa).

The next 9 membrane-spanning stretches (helical) occupy residues 33 to 53 (VVMLMLLTSLIGMLLATPSPA), 55 to 75 (LWLLVLGNLGIGLCAGAAAAV), 104 to 124 (NALLFSALLGGVGLWILSSFI), 127 to 147 (LTAWLTLASLLGYAVIYTLFL), 155 to 175 (IVIGGLAGAAPPLLGWTAVTG), 181 to 201 (GLLLVLIIFAWTPPHFWALAL), 228 to 248 (IVLYTVILIAVTLLPFATRMM), 252 to 272 (YLVGALVLGAGFLYRALKLLV), and 287 to 307 (IIYLMALFVVMLVDHYLFPIP).

This sequence belongs to the UbiA prenyltransferase family. Protoheme IX farnesyltransferase subfamily.

Its subcellular location is the cell inner membrane. It catalyses the reaction heme b + (2E,6E)-farnesyl diphosphate + H2O = Fe(II)-heme o + diphosphate. It participates in porphyrin-containing compound metabolism; heme O biosynthesis; heme O from protoheme: step 1/1. Functionally, converts heme B (protoheme IX) to heme O by substitution of the vinyl group on carbon 2 of heme B porphyrin ring with a hydroxyethyl farnesyl side group. The sequence is that of Protoheme IX farnesyltransferase from Teredinibacter turnerae (strain ATCC 39867 / T7901).